Reading from the N-terminus, the 445-residue chain is Putative H/ACA ribonucleoprotein complex subunit 4 (445 aa).

The tract at residues 1–32 (MGKKDKRSKLEGDDLAEAQQKGSFQLPSSNET) is disordered. Positions 20 to 32 (QKGSFQLPSSNET) are enriched in polar residues. Catalysis depends on Asp-113, which acts as the Nucleophile. The 76-residue stretch at 284–359 (HKRVVVKDSC…VVAKSKRVIM (76 aa)) folds into the PUA domain. Positions 386–445 (LDKFGKPNDTTPKSWAKEYVQTSTKKEVKKEETPDEEEEEAPKKKSKKSKKQESSDSDSD) are disordered.

The protein belongs to the pseudouridine synthase TruB family. In terms of assembly, component of the small nucleolar ribonucleoprotein particle containing H/ACA-type snoRNAs (H/ACA snoRNPs).

Its subcellular location is the nucleus. The protein localises to the nucleolus. The catalysed reaction is a uridine in RNA = a pseudouridine in RNA. Functionally, plays a central role in ribosomal RNA processing. Probable catalytic subunit of H/ACA small nucleolar ribonucleoprotein (H/ACA snoRNP) complex, which catalyzes pseudouridylation of rRNA. This involves the isomerization of uridine such that the ribose is subsequently attached to C5, instead of the normal N1. Pseudouridine ('psi') residues may serve to stabilize the conformation of rRNAs. This Caenorhabditis elegans protein is Putative H/ACA ribonucleoprotein complex subunit 4.